A 197-amino-acid chain; its full sequence is Nucleoid occlusion factor SlmA (197 aa).

Residues 7–67 (INRREHILQC…GLIEFIEESL (61 aa)) enclose the HTH tetR-type domain. Positions 30-49 (TTAKLASEVGVSEAALYRHF) form a DNA-binding region, H-T-H motif. Positions 110–130 (ALLGENERLRSRISSLFAKIE) form a coiled coil.

It belongs to the nucleoid occlusion factor SlmA family. Homodimer. Interacts with FtsZ.

Its subcellular location is the cytoplasm. It localises to the nucleoid. Functionally, required for nucleoid occlusion (NO) phenomenon, which prevents Z-ring formation and cell division over the nucleoid. Acts as a DNA-associated cell division inhibitor that binds simultaneously chromosomal DNA and FtsZ, and disrupts the assembly of FtsZ polymers. SlmA-DNA-binding sequences (SBS) are dispersed on non-Ter regions of the chromosome, preventing FtsZ polymerization at these regions. This Shewanella sp. (strain W3-18-1) protein is Nucleoid occlusion factor SlmA.